A 411-amino-acid polypeptide reads, in one-letter code: LL-diaminopimelate aminotransferase (411 aa).

Residues tyrosine 15 and glycine 42 each coordinate substrate. Pyridoxal 5'-phosphate is bound by residues tyrosine 72, 108–109 (SK), tyrosine 132, asparagine 187, tyrosine 218, and 246–248 (SFS). Positions 109, 132, and 187 each coordinate substrate. Lysine 249 is modified (N6-(pyridoxal phosphate)lysine). Pyridoxal 5'-phosphate is bound by residues arginine 257 and asparagine 292. The substrate site is built by asparagine 292 and arginine 388.

It belongs to the class-I pyridoxal-phosphate-dependent aminotransferase family. LL-diaminopimelate aminotransferase subfamily. In terms of assembly, homodimer. Pyridoxal 5'-phosphate serves as cofactor.

It carries out the reaction (2S,6S)-2,6-diaminopimelate + 2-oxoglutarate = (S)-2,3,4,5-tetrahydrodipicolinate + L-glutamate + H2O + H(+). Its pathway is amino-acid biosynthesis; L-lysine biosynthesis via DAP pathway; LL-2,6-diaminopimelate from (S)-tetrahydrodipicolinate (aminotransferase route): step 1/1. Involved in the synthesis of meso-diaminopimelate (m-DAP or DL-DAP), required for both lysine and peptidoglycan biosynthesis. Catalyzes the direct conversion of tetrahydrodipicolinate to LL-diaminopimelate. In Citrifermentans bemidjiense (strain ATCC BAA-1014 / DSM 16622 / JCM 12645 / Bem) (Geobacter bemidjiensis), this protein is LL-diaminopimelate aminotransferase.